The sequence spans 239 residues: Vesicle-associated protein 1-2 (239 aa).

Methionine 1 carries the N-acetylmethionine modification. At 1-215 the chain is on the cytoplasmic side; the sequence is MSNELLTIDP…RRESKRSKSG (215 aa). Serine 2 carries the N-acetylserine; in Vesicle-associated protein 1-2, N-terminally processed modification. One can recognise an MSP domain in the interval 5–125; that stretch reads LLTIDPVDLQ…EETKLRVVYV (121 aa). Positions 123-174 are disordered; it reads VYVAPPRPPSPVREGSEEGSSPRASVSDNGNASDFTAAPRFSADRVDAQDNS. At serine 132 the chain carries Phosphoserine. Residues 140-156 are compositionally biased toward polar residues; sequence EGSSPRASVSDNGNASD. Position 164 is a phosphoserine (serine 164). The stretch at 169 to 215 forms a coiled coil; that stretch reads DAQDNSSEARALVTKLTEEKNSAVQLNNRLQQELDQLRRESKRSKSG. A helical; Anchor for type IV membrane protein transmembrane segment spans residues 216 to 236; it reads GIPFMYVLLVGLIGLILGYIM.

It belongs to the VAMP-associated protein (VAP) (TC 9.B.17) family. Interacts with ORP3A. Binds to VLG at the endomembrane system.

It localises to the endoplasmic reticulum membrane. Its function is as follows. Vesicle-associated protein that binds the oxysterol-binding protein ORP3A and allows its targeting to the ER. In Arabidopsis thaliana (Mouse-ear cress), this protein is Vesicle-associated protein 1-2.